Consider the following 234-residue polypeptide: Purine nucleoside phosphorylase DeoD-type (234 aa).

A purine D-ribonucleoside is bound at residue His4. Phosphate-binding positions include Gly20, Arg24, Arg43, and Arg87 to Ser90. Residues Glu162, Glu179–Glu181, and Ser203–Asp204 each bind a purine D-ribonucleoside. The Proton donor role is filled by Asp204.

Belongs to the PNP/UDP phosphorylase family. Homohexamer; trimer of homodimers.

It carries out the reaction a purine D-ribonucleoside + phosphate = a purine nucleobase + alpha-D-ribose 1-phosphate. It catalyses the reaction a purine 2'-deoxy-D-ribonucleoside + phosphate = a purine nucleobase + 2-deoxy-alpha-D-ribose 1-phosphate. Its function is as follows. Catalyzes the reversible phosphorolytic breakdown of the N-glycosidic bond in the beta-(deoxy)ribonucleoside molecules, with the formation of the corresponding free purine bases and pentose-1-phosphate. In Roseobacter denitrificans (strain ATCC 33942 / OCh 114) (Erythrobacter sp. (strain OCh 114)), this protein is Purine nucleoside phosphorylase DeoD-type.